Here is a 252-residue protein sequence, read N- to C-terminus: Carboxy-S-adenosyl-L-methionine synthase (252 aa).

Residues Tyr-45, 70-72 (GCS), 95-96 (DN), 127-128 (DI), Asn-142, and Arg-209 contribute to the S-adenosyl-L-methionine site.

The protein belongs to the class I-like SAM-binding methyltransferase superfamily. Cx-SAM synthase family. As to quaternary structure, homodimer.

The enzyme catalyses prephenate + S-adenosyl-L-methionine = carboxy-S-adenosyl-L-methionine + 3-phenylpyruvate + H2O. Functionally, catalyzes the conversion of S-adenosyl-L-methionine (SAM) to carboxy-S-adenosyl-L-methionine (Cx-SAM). This chain is Carboxy-S-adenosyl-L-methionine synthase, found in Pseudomonas paraeruginosa (strain DSM 24068 / PA7) (Pseudomonas aeruginosa (strain PA7)).